A 1196-amino-acid polypeptide reads, in one-letter code: Chromosome partition protein Smc (1196 aa).

ATP is bound at residue 32–39; sequence PNGSGKSN. Coiled coils occupy residues 168-288 and 327-497; these read LKHR…SVQQ and DALE…LERK. Residues 510-621 form the SMC hinge domain; it reads AGILGPMAKL…VDDLDRALAL (112 aa). 2 coiled-coil regions span residues 654–829 and 972–1026; these read LEVT…RAQQ and DRPT…KDLL.

The protein belongs to the SMC family. As to quaternary structure, homodimer.

The protein localises to the cytoplasm. Required for chromosome condensation and partitioning. The protein is Chromosome partition protein Smc of Mycolicibacterium paratuberculosis (strain ATCC BAA-968 / K-10) (Mycobacterium paratuberculosis).